A 118-amino-acid polypeptide reads, in one-letter code: Large ribosomal subunit protein uL18 (118 aa).

Belongs to the universal ribosomal protein uL18 family. In terms of assembly, part of the 50S ribosomal subunit; part of the 5S rRNA/L5/L18/L25 subcomplex. Contacts the 5S and 23S rRNAs.

Its function is as follows. This is one of the proteins that bind and probably mediate the attachment of the 5S RNA into the large ribosomal subunit, where it forms part of the central protuberance. The sequence is that of Large ribosomal subunit protein uL18 from Ligilactobacillus salivarius (strain UCC118) (Lactobacillus salivarius).